The following is a 286-amino-acid chain: tRNA pseudouridine synthase B (286 aa).

Aspartate 40 acts as the Nucleophile in catalysis.

It belongs to the pseudouridine synthase TruB family. Type 1 subfamily.

The enzyme catalyses uridine(55) in tRNA = pseudouridine(55) in tRNA. Its function is as follows. Responsible for synthesis of pseudouridine from uracil-55 in the psi GC loop of transfer RNAs. This Mesoplasma florum (strain ATCC 33453 / NBRC 100688 / NCTC 11704 / L1) (Acholeplasma florum) protein is tRNA pseudouridine synthase B.